An 848-amino-acid chain; its full sequence is Leucine--tRNA ligase (848 aa).

Residues 1–16 (MCPEQPHDTRAERDEM) are compositionally biased toward basic and acidic residues. The tract at residues 1–30 (MCPEQPHDTRAERDEMSEQTQQAAQPAETA) is disordered. Over residues 18 to 30 (EQTQQAAQPAETA) the composition is skewed to low complexity. The short motif at 69–79 (PYPSGDLHMGH) is the 'HIGH' region element. A 'KMSKS' region motif is present at residues 614 to 618 (KMSKS). Lys-617 contributes to the ATP binding site.

This sequence belongs to the class-I aminoacyl-tRNA synthetase family.

It localises to the cytoplasm. It carries out the reaction tRNA(Leu) + L-leucine + ATP = L-leucyl-tRNA(Leu) + AMP + diphosphate. This chain is Leucine--tRNA ligase, found in Nocardioides sp. (strain ATCC BAA-499 / JS614).